We begin with the raw amino-acid sequence, 218 residues long: Glycerol-3-phosphate acyltransferase (218 aa).

5 helical membrane passes run 10–30, 60–80, 88–108, 125–145, and 165–185; these read LTLGIAIVGGYLLGSIPFGLI, DLAAITLLGDAGKGVVAVLLA, PAIIALAGGSAFLGHLFPVWL, SAAWPVGVAAGATWLAMAFLF, and AFDQPYPFMGLCLFMAVLIFI.

The protein belongs to the PlsY family. In terms of assembly, probably interacts with PlsX.

It localises to the cell inner membrane. It catalyses the reaction an acyl phosphate + sn-glycerol 3-phosphate = a 1-acyl-sn-glycero-3-phosphate + phosphate. The protein operates within lipid metabolism; phospholipid metabolism. Functionally, catalyzes the transfer of an acyl group from acyl-phosphate (acyl-PO(4)) to glycerol-3-phosphate (G3P) to form lysophosphatidic acid (LPA). This enzyme utilizes acyl-phosphate as fatty acyl donor, but not acyl-CoA or acyl-ACP. This chain is Glycerol-3-phosphate acyltransferase, found in Caulobacter vibrioides (strain ATCC 19089 / CIP 103742 / CB 15) (Caulobacter crescentus).